An 81-amino-acid polypeptide reads, in one-letter code: ATP synthase subunit c, chloroplastic (81 aa).

Helical transmembrane passes span 3–23 (PLIS…ASIG) and 53–73 (LLLS…VALA).

The protein belongs to the ATPase C chain family. F-type ATPases have 2 components, F(1) - the catalytic core - and F(0) - the membrane proton channel. F(1) has five subunits: alpha(3), beta(3), gamma(1), delta(1), epsilon(1). F(0) has four main subunits: a(1), b(1), b'(1) and c(10-14). The alpha and beta chains form an alternating ring which encloses part of the gamma chain. F(1) is attached to F(0) by a central stalk formed by the gamma and epsilon chains, while a peripheral stalk is formed by the delta, b and b' chains.

Its subcellular location is the plastid. The protein localises to the chloroplast thylakoid membrane. F(1)F(0) ATP synthase produces ATP from ADP in the presence of a proton or sodium gradient. F-type ATPases consist of two structural domains, F(1) containing the extramembraneous catalytic core and F(0) containing the membrane proton channel, linked together by a central stalk and a peripheral stalk. During catalysis, ATP synthesis in the catalytic domain of F(1) is coupled via a rotary mechanism of the central stalk subunits to proton translocation. Its function is as follows. Key component of the F(0) channel; it plays a direct role in translocation across the membrane. A homomeric c-ring of between 10-14 subunits forms the central stalk rotor element with the F(1) delta and epsilon subunits. The chain is ATP synthase subunit c, chloroplastic from Huperzia lucidula (Shining clubmoss).